The primary structure comprises 420 residues: Glutamate-1-semialdehyde 2,1-aminomutase (420 aa).

Lys259 bears the N6-(pyridoxal phosphate)lysine mark.

Belongs to the class-III pyridoxal-phosphate-dependent aminotransferase family. HemL subfamily. Pyridoxal 5'-phosphate serves as cofactor.

The protein resides in the cytoplasm. It catalyses the reaction (S)-4-amino-5-oxopentanoate = 5-aminolevulinate. Its pathway is porphyrin-containing compound metabolism; protoporphyrin-IX biosynthesis; 5-aminolevulinate from L-glutamyl-tRNA(Glu): step 2/2. This Sulfolobus acidocaldarius (strain ATCC 33909 / DSM 639 / JCM 8929 / NBRC 15157 / NCIMB 11770) protein is Glutamate-1-semialdehyde 2,1-aminomutase.